The sequence spans 186 residues: Casparian strip membrane protein 3 (186 aa).

At 1–26 the chain is on the cytoplasmic side; the sequence is MKAGALELGEGSKTSIPRGGVNRGIS. The chain crosses the membrane as a helical span at residues 27 to 47; sequence ILDFILRLITIIGTLGSAIAM. The Extracellular segment spans residues 48-74; that stretch reads GTTNETLPFFTQFTQFRAEYDDLPTFT. N-linked (GlcNAc...) asparagine glycosylation is present at N51. The chain crosses the membrane as a helical span at residues 75–95; sequence FFVIANSIVSGYLVLSLPMSI. The Cytoplasmic portion of the chain corresponds to 96 to 107; sequence LHIVRSGARASR. Residues 108–128 traverse the membrane as a helical segment; that stretch reads IVLIFFDTAMLALLTAAASAA. Residues 129-161 are Extracellular-facing; it reads SAIVYLAHKGNAQANWFAICQQFKSFCERISGS. A helical transmembrane segment spans residues 162–182; that stretch reads LIGSFGGIILFILLVLLSAVA. At 183 to 186 the chain is on the cytoplasmic side; sequence LSRC.

Belongs to the Casparian strip membrane proteins (CASP) family. In terms of assembly, homodimer and heterodimers.

It is found in the cell membrane. Functionally, regulates membrane-cell wall junctions and localized cell wall deposition. Required for establishment of the Casparian strip membrane domain (CSD) and the subsequent formation of Casparian strips, a cell wall modification of the root endodermis that determines an apoplastic barrier between the intraorganismal apoplasm and the extraorganismal apoplasm and prevents lateral diffusion. The polypeptide is Casparian strip membrane protein 3 (Vitis vinifera (Grape)).